The sequence spans 138 residues: Thyrotropin subunit beta (138 aa).

The N-terminal stretch at 1–20 (MTAIFLMSVLFGLACGQAMS) is a signal peptide. 6 disulfide bridges follow: C22/C72, C36/C87, C39/C125, C47/C103, C51/C105, and C108/C115. The N-linked (GlcNAc...) asparagine glycan is linked to N43. The propeptide occupies 133–138 (VVGLSI).

It belongs to the glycoprotein hormones subunit beta family. Heterodimer of a common alpha chain and a unique beta chain which confers biological specificity to thyrotropin, lutropin, follitropin and gonadotropin.

The protein localises to the secreted. Indispensable for the control of thyroid structure and metabolism. This is Thyrotropin subunit beta (TSHB) from Lama glama (Llama).